The following is a 132-amino-acid chain: Histone H2B.1 (132 aa).

Residues 1 to 13 (MSSKASKAPASKA) are compositionally biased toward low complexity. The disordered stretch occupies residues 1–40 (MSSKASKAPASKAPAEKKPAAKKTSSSVDASKKRTKTRKE). Lys7 bears the N6-acetyllysine; alternate mark. Lys7 participates in a covalent cross-link: Glycyl lysine isopeptide (Lys-Gly) (interchain with G-Cter in SUMO); alternate. Ser11 is modified (phosphoserine). Lys12 carries the N6-acetyllysine modification. Lys17 bears the N6-acetyllysine; alternate mark. Residue Lys17 forms a Glycyl lysine isopeptide (Lys-Gly) (interchain with G-Cter in SUMO); alternate linkage. Residue Lys18 forms a Glycyl lysine isopeptide (Lys-Gly) (interchain with G-Cter in SUMO) linkage. Residue Lys125 forms a Glycyl lysine isopeptide (Lys-Gly) (interchain with G-Cter in ubiquitin) linkage.

This sequence belongs to the histone H2B family. As to quaternary structure, the nucleosome is a histone octamer containing two molecules each of H2A, H2B, H3 and H4 assembled in one H3-H4 heterotetramer and two H2A-H2B heterodimers. The octamer wraps approximately 147 bp of DNA. Monoubiquitinated by the UBC2-BRE1 complex to form H2BK123ub1. H2BK123ub1 gives a specific tag for epigenetic transcriptional activation and is also prerequisite for H3K4me and H3K79me formation. H2BK123ub1 also modulates the formation of double-strand breaks during meiosis and is a prerequisite for DNA-damage checkpoint activation. In terms of processing, phosphorylated by STE20 to form H2BS10ph during progression through meiotic prophase. May be correlated with chromosome condensation. Post-translationally, acetylated by GCN5 to form H2BK11ac and H2BK16ac. H2BK16ac can also be formed by ESA1. Acetylation of N-terminal lysines and particularly formation of H2BK11acK16ac has a positive effect on transcription. Sumoylation to form H2BK6su and probably also H2BK16su or H2BK17su, occurs preferentially near the telomeres and represses gene transcription.

The protein resides in the nucleus. The protein localises to the chromosome. Functionally, core component of nucleosome. Nucleosomes wrap and compact DNA into chromatin, limiting DNA accessibility to the cellular machineries which require DNA as a template. Histones thereby play a central role in transcription regulation, DNA repair, DNA replication and chromosomal stability. DNA accessibility is regulated via a complex set of post-translational modifications of histones, also called histone code, and nucleosome remodeling. This Eremothecium gossypii (strain ATCC 10895 / CBS 109.51 / FGSC 9923 / NRRL Y-1056) (Yeast) protein is Histone H2B.1 (HTB1).